We begin with the raw amino-acid sequence, 374 residues long: Ribosomal RNA large subunit methyltransferase G (374 aa).

This sequence belongs to the methyltransferase superfamily. RlmG family.

It localises to the cytoplasm. The enzyme catalyses guanosine(1835) in 23S rRNA + S-adenosyl-L-methionine = N(2)-methylguanosine(1835) in 23S rRNA + S-adenosyl-L-homocysteine + H(+). Functionally, specifically methylates the guanine in position 1835 (m2G1835) of 23S rRNA. The sequence is that of Ribosomal RNA large subunit methyltransferase G from Pseudomonas savastanoi pv. phaseolicola (strain 1448A / Race 6) (Pseudomonas syringae pv. phaseolicola (strain 1448A / Race 6)).